A 101-amino-acid polypeptide reads, in one-letter code: Small ribosomal subunit protein uS10 (101 aa).

This sequence belongs to the universal ribosomal protein uS10 family. In terms of assembly, part of the 30S ribosomal subunit.

In terms of biological role, involved in the binding of tRNA to the ribosomes. This chain is Small ribosomal subunit protein uS10, found in Porphyromonas gingivalis (strain ATCC 33277 / DSM 20709 / CIP 103683 / JCM 12257 / NCTC 11834 / 2561).